Reading from the N-terminus, the 304-residue chain is 3-diazoavenalumate denitrifying reductase (304 aa).

This sequence belongs to the NAD(P)-dependent epimerase/dehydratase family.

It carries out the reaction 3-diazoavenalumate + NADPH + H(+) = avenalumate + N2 + NADP(+). The catalysed reaction is 3-diazoavenalumate + NADH + H(+) = avenalumate + N2 + NAD(+). It catalyses the reaction (E)-3-diazocoumarate + NADPH = N2 + (E)-4-coumarate + NADP(+). The enzyme catalyses (E)-3-diazocoumarate + NADH = N2 + (E)-4-coumarate + NAD(+). In terms of biological role, oxidoreductase involved in the biosynthesis of avenalumic acid (AVA). Catalyzes the denitrification of 3-diazoavenalumic acid (3-DAA) to produce AVA. It can also act on 3-diazocoumaric acid (3-DCA). Can use NADPH or NADH as a reductant, with a preference for NADPH. The chain is 3-diazoavenalumate denitrifying reductase from Streptomyces sp.